A 223-amino-acid polypeptide reads, in one-letter code: Probable transaldolase (223 aa).

Lysine 83 (schiff-base intermediate with substrate) is an active-site residue.

Belongs to the transaldolase family. Type 3B subfamily.

The protein resides in the cytoplasm. The catalysed reaction is D-sedoheptulose 7-phosphate + D-glyceraldehyde 3-phosphate = D-erythrose 4-phosphate + beta-D-fructose 6-phosphate. The protein operates within carbohydrate degradation; pentose phosphate pathway; D-glyceraldehyde 3-phosphate and beta-D-fructose 6-phosphate from D-ribose 5-phosphate and D-xylulose 5-phosphate (non-oxidative stage): step 2/3. Its function is as follows. Transaldolase is important for the balance of metabolites in the pentose-phosphate pathway. In Myxococcus xanthus (strain DK1622), this protein is Probable transaldolase.